The chain runs to 547 residues: Chaperonin GroEL 3 (547 aa).

ATP is bound by residues 30–33 (TLGP), lysine 51, 87–91 (DGTTT), glycine 415, and aspartate 496.

The protein belongs to the chaperonin (HSP60) family. In terms of assembly, forms a cylinder of 14 subunits composed of two heptameric rings stacked back-to-back. Interacts with the co-chaperonin GroES.

It localises to the cytoplasm. It carries out the reaction ATP + H2O + a folded polypeptide = ADP + phosphate + an unfolded polypeptide.. Its function is as follows. Together with its co-chaperonin GroES, plays an essential role in assisting protein folding. The GroEL-GroES system forms a nano-cage that allows encapsulation of the non-native substrate proteins and provides a physical environment optimized to promote and accelerate protein folding. The sequence is that of Chaperonin GroEL 3 from Bradyrhizobium sp. (strain ORS 278).